A 113-amino-acid chain; its full sequence is Dolichyl-diphosphooligosaccharide--protein glycosyltransferase subunit DAD1 (113 aa).

N-acetylserine is present on Ser2. Residues 2-30 (SASVVSVISRFLEEYLSSTPQRLKLLDAY) lie on the Cytoplasmic side of the membrane. Residues 31-51 (LLYILLTGALQFGYCLLVGTF) form a helical membrane-spanning segment. Position 52 (Pro52) is a topological domain, lumenal. The helical transmembrane segment at 53–73 (FNSFLSGFISCVGSFILAVRL) threads the bilayer. Over 74-92 (RIQINPQNKADFQGISPER) the chain is Cytoplasmic. A helical transmembrane segment spans residues 93 to 113 (AFADFLFASTILHLVVMNFVG).

The protein belongs to the DAD/OST2 family. In terms of assembly, component of the oligosaccharyltransferase (OST) complex. OST exists in two different complex forms which contain common core subunits RPN1, RPN2, OST48, OST4, DAD1 and TMEM258, either STT3A or STT3B as catalytic subunits, and form-specific accessory subunits. STT3A complex assembly occurs through the formation of 3 subcomplexes. Subcomplex 1 contains RPN1 and TMEM258, subcomplex 2 contains the STT3A-specific subunits STT3A, DC2/OSTC, and KCP2 as well as the core subunit OST4, and subcomplex 3 contains RPN2, DAD1, and OST48. The STT3A complex can form stable complexes with the Sec61 complex or with both the Sec61 and TRAP complexes.

It localises to the endoplasmic reticulum membrane. Its pathway is protein modification; protein glycosylation. In terms of biological role, subunit of the oligosaccharyl transferase (OST) complex that catalyzes the initial transfer of a defined glycan (Glc(3)Man(9)GlcNAc(2) in eukaryotes) from the lipid carrier dolichol-pyrophosphate to an asparagine residue within an Asn-X-Ser/Thr consensus motif in nascent polypeptide chains, the first step in protein N-glycosylation. N-glycosylation occurs cotranslationally and the complex associates with the Sec61 complex at the channel-forming translocon complex that mediates protein translocation across the endoplasmic reticulum (ER). All subunits are required for a maximal enzyme activity. This is Dolichyl-diphosphooligosaccharide--protein glycosyltransferase subunit DAD1 from Pongo abelii (Sumatran orangutan).